A 227-amino-acid chain; its full sequence is MAYPMQLGFQDATSPIMEELLHFHDHTLMIVFLISSLVLYIISLMLTTKLTHTSTMDAQEVETIWTILPAIILILIALPSLRILYMMDEINNPSLTVKTMGHQWYWSYEYTDYEDLSFDSYMVPTSELKPGELRLLEVDNRVVLPMEMTIRMLVSSEDVLHSWAVPSLGLKTDAIPGRLNQTTLMSTRPGLYYGQCSEICGSNHSFMPIVLEMVPLKYFEKWSASML.

Topologically, residues 1 to 14 (MAYPMQLGFQDATS) are mitochondrial intermembrane. A helical membrane pass occupies residues 15 to 45 (PIMEELLHFHDHTLMIVFLISSLVLYIISLM). Over 46–59 (LTTKLTHTSTMDAQ) the chain is Mitochondrial matrix. A helical transmembrane segment spans residues 60–87 (EVETIWTILPAIILILIALPSLRILYMM). The Mitochondrial intermembrane segment spans residues 88 to 227 (DEINNPSLTV…YFEKWSASML (140 aa)). Cu cation contacts are provided by His-161, Cys-196, Glu-198, Cys-200, His-204, and Met-207. Glu-198 contacts Mg(2+). Tyr-218 is subject to Phosphotyrosine.

This sequence belongs to the cytochrome c oxidase subunit 2 family. Component of the cytochrome c oxidase (complex IV, CIV), a multisubunit enzyme composed of 14 subunits. The complex is composed of a catalytic core of 3 subunits MT-CO1, MT-CO2 and MT-CO3, encoded in the mitochondrial DNA, and 11 supernumerary subunits COX4I, COX5A, COX5B, COX6A, COX6B, COX6C, COX7A, COX7B, COX7C, COX8 and NDUFA4, which are encoded in the nuclear genome. The complex exists as a monomer or a dimer and forms supercomplexes (SCs) in the inner mitochondrial membrane with NADH-ubiquinone oxidoreductase (complex I, CI) and ubiquinol-cytochrome c oxidoreductase (cytochrome b-c1 complex, complex III, CIII), resulting in different assemblies (supercomplex SCI(1)III(2)IV(1) and megacomplex MCI(2)III(2)IV(2)). Found in a complex with TMEM177, COA6, COX18, COX20, SCO1 and SCO2. Interacts with TMEM177 in a COX20-dependent manner. Interacts with COX20. Interacts with COX16. It depends on Cu cation as a cofactor.

It is found in the mitochondrion inner membrane. The catalysed reaction is 4 Fe(II)-[cytochrome c] + O2 + 8 H(+)(in) = 4 Fe(III)-[cytochrome c] + 2 H2O + 4 H(+)(out). In terms of biological role, component of the cytochrome c oxidase, the last enzyme in the mitochondrial electron transport chain which drives oxidative phosphorylation. The respiratory chain contains 3 multisubunit complexes succinate dehydrogenase (complex II, CII), ubiquinol-cytochrome c oxidoreductase (cytochrome b-c1 complex, complex III, CIII) and cytochrome c oxidase (complex IV, CIV), that cooperate to transfer electrons derived from NADH and succinate to molecular oxygen, creating an electrochemical gradient over the inner membrane that drives transmembrane transport and the ATP synthase. Cytochrome c oxidase is the component of the respiratory chain that catalyzes the reduction of oxygen to water. Electrons originating from reduced cytochrome c in the intermembrane space (IMS) are transferred via the dinuclear copper A center (CU(A)) of subunit 2 and heme A of subunit 1 to the active site in subunit 1, a binuclear center (BNC) formed by heme A3 and copper B (CU(B)). The BNC reduces molecular oxygen to 2 water molecules using 4 electrons from cytochrome c in the IMS and 4 protons from the mitochondrial matrix. In Syncerus caffer (African buffalo), this protein is Cytochrome c oxidase subunit 2 (MT-CO2).